The primary structure comprises 284 residues: Probable O-methyltransferase ustE (284 aa).

N-linked (GlcNAc...) asparagine glycans are attached at residues N22 and N29. 2 helical membrane-spanning segments follow: residues 88-108 (LLLL…VLTV) and 157-177 (YLAT…VCEI). The N-linked (GlcNAc...) asparagine glycan is linked to N205. A helical transmembrane segment spans residues 215 to 235 (GLALASGGMIYGMSIAMFFMW). A glycan (N-linked (GlcNAc...) asparagine) is linked at N264.

This sequence belongs to the class VI-like SAM-binding methyltransferase superfamily. Isoprenylcysteine carboxyl methyltransferase family.

The protein localises to the membrane. The protein operates within secondary metabolite biosynthesis. In terms of biological role, probable O-methyltransferase; part of the gene cluster that mediates the biosynthesis of ustilaginoidins, dimeric gamma-naphthopyrones isolated from different fungal species. The first step in the biosynthesis of ustilaginoidins is the production of gamma-naphthopyrone precursor YWA1 by the non-reducing polyketide synthase ustP, via condensation of one acetyl-CoA starter unit with 6 malonyl-CoA units. YWA1 is then probably substrate of the ustZ to yield norrubrofusarin via a dehydration reaction. A key enzyme in the biosynthetic pathway is the laccase ustL, which catalyzes the oxidative dimerization of norrubrofusarin to ustilaginoidin A. It can produce the M- and P-atropisomers in varying amounts, depending on the reaction conditions. For the biosynthesis of 3-methylustilaginoid in derivatives such as chaetochromin A, a methylated derivative of YWA1 is required. The C-methylation is considered to be catalyzed by ustM, the phosphopantetheine attachment site of which indicates that it acts on the growing polyketide chain before release of the product. For the biosynthesis of chaetochromin A, it is assumed that saturation of the D2 double bond takes place before dimerization, and is probably catalyzed by an external reductase because no candidate gene was identified within the cluster. The chain is Probable O-methyltransferase ustE from Ustilaginoidea virens (Rice false smut fungus).